A 362-amino-acid polypeptide reads, in one-letter code: Ferredoxin--NADP reductase 1 (362 aa).

Residues aspartate 47, glutamine 55, tyrosine 60, alanine 100, phenylalanine 141, aspartate 309, and serine 350 each contribute to the FAD site.

Belongs to the ferredoxin--NADP reductase type 2 family. In terms of assembly, homodimer. FAD is required as a cofactor.

The enzyme catalyses 2 reduced [2Fe-2S]-[ferredoxin] + NADP(+) + H(+) = 2 oxidized [2Fe-2S]-[ferredoxin] + NADPH. This Cupriavidus pinatubonensis (strain JMP 134 / LMG 1197) (Cupriavidus necator (strain JMP 134)) protein is Ferredoxin--NADP reductase 1.